The primary structure comprises 207 residues: Small ribosomal subunit protein uS4 (207 aa).

Positions 35-54 are disordered; the sequence is RPKPPGPQLGRPRRLSDRGQ. An S4 RNA-binding domain is found at 97–163; the sequence is RRLDNVLFRL…AYFKTLAENI (67 aa).

This sequence belongs to the universal ribosomal protein uS4 family. In terms of assembly, part of the 30S ribosomal subunit. Contacts protein S5. The interaction surface between S4 and S5 is involved in control of translational fidelity.

In terms of biological role, one of the primary rRNA binding proteins, it binds directly to 16S rRNA where it nucleates assembly of the body of the 30S subunit. Functionally, with S5 and S12 plays an important role in translational accuracy. In Dehalococcoides mccartyi (strain CBDB1), this protein is Small ribosomal subunit protein uS4.